Reading from the N-terminus, the 337-residue chain is Alanine racemase (337 aa).

Lys-33 (proton acceptor; specific for D-alanine) is an active-site residue. Lys-33 carries the post-translational modification N6-(pyridoxal phosphate)lysine. A substrate-binding site is contributed by Arg-118. Catalysis depends on Tyr-246, which acts as the Proton acceptor; specific for L-alanine. Met-292 contacts substrate.

Belongs to the alanine racemase family. The cofactor is pyridoxal 5'-phosphate.

It catalyses the reaction L-alanine = D-alanine. Its pathway is amino-acid biosynthesis; D-alanine biosynthesis; D-alanine from L-alanine: step 1/1. In terms of biological role, catalyzes the interconversion of L-alanine and D-alanine. May also act on other amino acids. This is Alanine racemase (alr) from Campylobacter concisus (strain 13826).